We begin with the raw amino-acid sequence, 601 residues long: Sulfite reductase [NADPH] flavoprotein alpha-component (601 aa).

Positions 64 to 202 (ITLISASQTG…AAAEWRARIV (139 aa)) constitute a Flavodoxin-like domain. FMN contacts are provided by residues 70-75 (SQTGNA), 117-120 (STQG), and 153-162 (LGDTSYEFFC). Positions 236-450 (EEPLVASLSV…IEHNDNFRLP (215 aa)) constitute an FAD-binding FR-type domain. FAD contacts are provided by residues Thr-324, Ala-358, 388–391 (RLYS), 406–408 (TVG), and 421–424 (GGAS). Residues 521-522 (SR), 527-531 (KIYVQ), and Asp-563 each bind NADP(+). Residue Tyr-601 participates in FAD binding.

The protein belongs to the NADPH-dependent sulphite reductase flavoprotein subunit CysJ family. In the N-terminal section; belongs to the flavodoxin family. This sequence in the C-terminal section; belongs to the flavoprotein pyridine nucleotide cytochrome reductase family. As to quaternary structure, alpha(8)-beta(8). The alpha component is a flavoprotein, the beta component is a hemoprotein. It depends on FAD as a cofactor. FMN is required as a cofactor.

It carries out the reaction hydrogen sulfide + 3 NADP(+) + 3 H2O = sulfite + 3 NADPH + 4 H(+). The protein operates within sulfur metabolism; hydrogen sulfide biosynthesis; hydrogen sulfide from sulfite (NADPH route): step 1/1. Functionally, component of the sulfite reductase complex that catalyzes the 6-electron reduction of sulfite to sulfide. This is one of several activities required for the biosynthesis of L-cysteine from sulfate. The flavoprotein component catalyzes the electron flow from NADPH -&gt; FAD -&gt; FMN to the hemoprotein component. The chain is Sulfite reductase [NADPH] flavoprotein alpha-component from Enterobacter sp. (strain 638).